The primary structure comprises 180 residues: Major urinary protein 2 (180 aa).

An N-terminal signal peptide occupies residues 1–18 (MKMLLLLCLGLTLVCVHA). Cys82 and Cys175 are disulfide-bonded.

The protein belongs to the calycin superfamily. Lipocalin family. As to expression, abundant in the urine of adult male mice but absent from that of females.

The protein localises to the secreted. Functionally, binds pheromones that are released from drying urine of males. These pheromones affect the sexual behavior of females. The polypeptide is Major urinary protein 2 (Mup2) (Mus musculus (Mouse)).